The sequence spans 347 residues: MSRPDSAVSLLPDYSLRAHNTFGFDARARVAARIGSPGQFASLARDPRVAGLDRLVLGGGSNVVFTRDFDGLVLLDEIRGRALVREDDGAWYVEAGGGENWHAFVEWTLAEGMPGLENLALIPGTVGAAPIQNIGAYGLEMKEHFASLRAVDLATGELVEFDAARCAFGYRDSFFKRDGRGRFAIVAVTFRLPKAWTPRIGYADVARELAARGIDARAARARDVFDAVVAIRRAKLPDPLALGNAGSFFKNPVIDAQAFAALRAREPDIVSYPQPDGRVKLAAGWLIDRCGWKGRALGAAAVHERQALVLVNLGGASGADVLALAHAIRRDVLGRFGVELEMEPVCL.

Residues 24–195 enclose the FAD-binding PCMH-type domain; that stretch reads FDARARVAAR…VAVTFRLPKA (172 aa). Residue Arg171 is part of the active site. Catalysis depends on Ser247, which acts as the Proton donor. Glu343 is an active-site residue.

Belongs to the MurB family. The cofactor is FAD.

It localises to the cytoplasm. It catalyses the reaction UDP-N-acetyl-alpha-D-muramate + NADP(+) = UDP-N-acetyl-3-O-(1-carboxyvinyl)-alpha-D-glucosamine + NADPH + H(+). The protein operates within cell wall biogenesis; peptidoglycan biosynthesis. Cell wall formation. The polypeptide is UDP-N-acetylenolpyruvoylglucosamine reductase (Burkholderia mallei (strain NCTC 10247)).